Reading from the N-terminus, the 89-residue chain is Cell division topological specificity factor (89 aa).

It belongs to the MinE family.

In terms of biological role, prevents the cell division inhibition by proteins MinC and MinD at internal division sites while permitting inhibition at polar sites. This ensures cell division at the proper site by restricting the formation of a division septum at the midpoint of the long axis of the cell. This Paracoccus denitrificans (strain Pd 1222) protein is Cell division topological specificity factor.